Reading from the N-terminus, the 883-residue chain is Translation initiation factor IF-2 (883 aa).

The disordered stretch occupies residues 1–259 (MVDTKTPGDK…GASKQRGRLT (259 aa)). Low complexity-rich tracts occupy residues 10–22 (KTLT…LTLK) and 77–89 (PRQQ…PQQS). A compositionally biased stretch (basic and acidic residues) spans 113 to 184 (ARVREIEERK…GDAEPAKKPA (72 aa)). A compositionally biased stretch (low complexity) spans 185–218 (ETSTTTTTAAPARPATTTTRTPTPAGRPPAVAAE). The segment covering 235–244 (PARPAPPPKQ) has biased composition (pro residues). Positions 379-548 (PRSPVVTVMG…MIALQAEILE (170 aa)) constitute a tr-type G domain. The segment at 388–395 (GHVDHGKT) is G1. 388 to 395 (GHVDHGKT) is a binding site for GTP. The interval 413 to 417 (GITQH) is G2. The segment at 436 to 439 (DTPG) is G3. Residues 436–440 (DTPGH) and 490–493 (NKID) contribute to the GTP site. The tract at residues 490-493 (NKID) is G4. Positions 526–528 (SAK) are G5.

It belongs to the TRAFAC class translation factor GTPase superfamily. Classic translation factor GTPase family. IF-2 subfamily.

The protein localises to the cytoplasm. One of the essential components for the initiation of protein synthesis. Protects formylmethionyl-tRNA from spontaneous hydrolysis and promotes its binding to the 30S ribosomal subunits. Also involved in the hydrolysis of GTP during the formation of the 70S ribosomal complex. The sequence is that of Translation initiation factor IF-2 from Rhodopseudomonas palustris (strain ATCC BAA-98 / CGA009).